Consider the following 84-residue polypeptide: Cell division topological specificity factor (84 aa).

Belongs to the MinE family.

In terms of biological role, prevents the cell division inhibition by proteins MinC and MinD at internal division sites while permitting inhibition at polar sites. This ensures cell division at the proper site by restricting the formation of a division septum at the midpoint of the long axis of the cell. The sequence is that of Cell division topological specificity factor from Cupriavidus taiwanensis (strain DSM 17343 / BCRC 17206 / CCUG 44338 / CIP 107171 / LMG 19424 / R1) (Ralstonia taiwanensis (strain LMG 19424)).